Reading from the N-terminus, the 309-residue chain is MPIRVQDELPAVSFLRNENVFVMTTTRATTQEIRPLKVLILNLMPKKIETENQFLRLLSNSPLQVDIQLLRIDARESRNTPAEHLNNFYCNFDEICDQNFDGLIVTGAPLGLVEFNDVAYWPQIKQVLEWAKDHVTSTLFVCWAVQAALNILYGIPKQTRAEKISGVYEHHILHPHALLTRGFDDSFLAPHSRYADFPAGLIRDYTDLEILAETEEGDAYLFASKDKRIAFVTGHPEYDANTLASEYFRDVEAGLNPEVPYNYFPQNDPQNKPRATWRSHGNLLFANWLNYYVYQITPYDLRHMNPTLE.

Cys142 functions as the Acyl-thioester intermediate in the catalytic mechanism. Residues Lys163 and Ser192 each contribute to the substrate site. The Proton acceptor role is filled by His235. Residue Glu237 is part of the active site. A substrate-binding site is contributed by Arg249.

It belongs to the MetA family.

The protein localises to the cytoplasm. It carries out the reaction L-homoserine + succinyl-CoA = O-succinyl-L-homoserine + CoA. It participates in amino-acid biosynthesis; L-methionine biosynthesis via de novo pathway; O-succinyl-L-homoserine from L-homoserine: step 1/1. Its function is as follows. Transfers a succinyl group from succinyl-CoA to L-homoserine, forming succinyl-L-homoserine. This chain is Homoserine O-succinyltransferase, found in Klebsiella pneumoniae (strain 342).